The primary structure comprises 490 residues: Gallate decarboxylase (490 aa).

Residue Asp165 participates in Mn(2+) binding. Prenylated FMN is bound by residues 168 to 170 (IHR) and Gly187. Glu233 provides a ligand contact to Mn(2+). Catalysis depends on Glu289, which acts as the Proton acceptor.

It belongs to the UbiD family. Requires prenylated FMN as cofactor. The cofactor is Mn(2+).

The catalysed reaction is 3,4,5-trihydroxybenzoate + H(+) = 1,2,3-trihydroxybenzene + CO2. The enzyme catalyses 3,4-dihydroxybenzoate + H(+) = catechol + CO2. Involved in tannin degradation. Catalyzes the decarboxylation of gallic acid and protocatechuic acid to pyrogallol and catechol, respectively. The polypeptide is Gallate decarboxylase (Lactiplantibacillus plantarum (strain ATCC BAA-793 / NCIMB 8826 / WCFS1) (Lactobacillus plantarum)).